Here is a 308-residue protein sequence, read N- to C-terminus: Transaldolase (308 aa).

Catalysis depends on lysine 125, which acts as the Schiff-base intermediate with substrate.

It belongs to the transaldolase family. Type 1 subfamily. In terms of assembly, homodimer.

It is found in the cytoplasm. The catalysed reaction is D-sedoheptulose 7-phosphate + D-glyceraldehyde 3-phosphate = D-erythrose 4-phosphate + beta-D-fructose 6-phosphate. The protein operates within carbohydrate degradation; pentose phosphate pathway; D-glyceraldehyde 3-phosphate and beta-D-fructose 6-phosphate from D-ribose 5-phosphate and D-xylulose 5-phosphate (non-oxidative stage): step 2/3. Functionally, transaldolase is important for the balance of metabolites in the pentose-phosphate pathway. The polypeptide is Transaldolase (Pseudomonas putida (strain GB-1)).